Reading from the N-terminus, the 555-residue chain is Steroid-22-oyl-CoA synthetase (555 aa).

This sequence belongs to the ATP-dependent AMP-binding enzyme family.

The catalysed reaction is 3-oxochol-4-en-22-oate + ATP + CoA = 3-oxochol-4-en-22-oyl-CoA + AMP + diphosphate. The enzyme catalyses 3-hydroxy-9-oxo-9,10-seco-chola-1,3,5-trien-22-oate + ATP + CoA = 3-hydroxy-9-oxo-9,10-seco-chola-1,3,5-trien-22-oyl-CoA + AMP + diphosphate. The protein operates within steroid metabolism. Functionally, involved in cholate catabolism. Catalyzes the ATP-dependent formation of CoA thioesters of steroids with isopropanoyl side chains, likely occurring as degradation intermediates. Can use 4-BNC, HSBNC and HIDP as substrate. The polypeptide is Steroid-22-oyl-CoA synthetase (Rhodococcus jostii (strain RHA1)).